The sequence spans 59 residues: Large ribosomal subunit protein uL30 (59 aa).

This sequence belongs to the universal ribosomal protein uL30 family. Part of the 50S ribosomal subunit.

The protein is Large ribosomal subunit protein uL30 of Buchnera aphidicola subsp. Acyrthosiphon pisum (strain 5A).